A 45-amino-acid chain; its full sequence is Large ribosomal subunit protein bL34 (45 aa).

Residues 1 to 45 (MTKRTFGGTSRKRKRVSGFRVRMRSHTGRRVIKSRRKRGRDRIAV) are disordered. Positions 10 to 45 (SRKRKRVSGFRVRMRSHTGRRVIKSRRKRGRDRIAV) are enriched in basic residues.

The protein belongs to the bacterial ribosomal protein bL34 family.

The sequence is that of Large ribosomal subunit protein bL34 from Prochlorococcus marinus (strain MIT 9515).